We begin with the raw amino-acid sequence, 191 residues long: Neuronal calcium sensor 1 (191 aa).

G2 carries the N-myristoyl glycine lipid modification. EF-hand domains follow at residues 24-59 (ESEI…FPFG), 60-95 (DPSK…TSRG), 96-131 (TVEE…IYRM), and 144-179 (TPEK…DPTI). Residues D73, N75, D77, E84, D109, D111, D113, Y115, E120, D157, N159, D161, Q163, and E168 each contribute to the Ca(2+) site.

This sequence belongs to the recoverin family.

It is found in the perikaryon. Its subcellular location is the cell projection. The protein resides in the growth cone. Functionally, neuronal calcium sensor, regulator of G protein-coupled receptor phosphorylation in a calcium dependent manner. Regulates neurite extension and branching by activity-dependent Ca(2+) influx in growth cones. The polypeptide is Neuronal calcium sensor 1 (Lymnaea stagnalis (Great pond snail)).